A 171-amino-acid chain; its full sequence is Small ribosomal subunit protein uS5 (171 aa).

An S5 DRBM domain is found at 14-77; it reads YIEKLVNIRR…DKARKAMKNV (64 aa).

Belongs to the universal ribosomal protein uS5 family. As to quaternary structure, part of the 30S ribosomal subunit. Contacts proteins S4 and S8.

Its function is as follows. With S4 and S12 plays an important role in translational accuracy. Functionally, located at the back of the 30S subunit body where it stabilizes the conformation of the head with respect to the body. This is Small ribosomal subunit protein uS5 from Vesicomyosocius okutanii subsp. Calyptogena okutanii (strain HA).